The chain runs to 468 residues: Na(+)/H(+) antiporter NhaA (468 aa).

The next 12 membrane-spanning stretches (helical) occupy residues 28 to 48 (FLHVEAVSGAVLLAAAAIALV), 79 to 99 (LHFWINDALMTLFFLAVGMEI), 115 to 135 (ALPLAAALGGVVAPALIYLAF), 143 to 163 (AGWAVPTATDIAFAVGVLALL), 173 to 193 (IFLLALAIIDDIIAVLIIAFF), 196 to 216 (GGLDYSGFAVAALGIAIVLGL), 219 to 239 (IGIGTAYAYVLPGAIVWTGLL), 240 to 260 (MTGAHPTLAGVVLGLMTPVVP), 317 to 337 (ALHPWVAYAIMPLFALANAGV), 356 to 376 (VAGALIVGKPAGVIAMSWLLV), 392 to 412 (IVLIGLLAGVGFTMSIFIAML), and 426 to 446 (LGVLLGSLATAMLGLAWGAIY).

This sequence belongs to the NhaA Na(+)/H(+) (TC 2.A.33) antiporter family.

It is found in the cell inner membrane. The catalysed reaction is Na(+)(in) + 2 H(+)(out) = Na(+)(out) + 2 H(+)(in). Na(+)/H(+) antiporter that extrudes sodium in exchange for external protons. This chain is Na(+)/H(+) antiporter NhaA, found in Bordetella petrii (strain ATCC BAA-461 / DSM 12804 / CCUG 43448).